The sequence spans 459 residues: Cysteine--tRNA ligase (459 aa).

Position 31 (Cys31) interacts with Zn(2+). The 'HIGH' region motif lies at 33–43; sequence PTVYDNPHIGN. Cys216, His241, and Glu245 together coordinate Zn(2+). A 'KMSKS' region motif is present at residues 274 to 278; that stretch reads KMSKS. Lys277 serves as a coordination point for ATP.

The protein belongs to the class-I aminoacyl-tRNA synthetase family. In terms of assembly, monomer. Zn(2+) is required as a cofactor.

It localises to the cytoplasm. It carries out the reaction tRNA(Cys) + L-cysteine + ATP = L-cysteinyl-tRNA(Cys) + AMP + diphosphate. In Rickettsia canadensis (strain McKiel), this protein is Cysteine--tRNA ligase.